Reading from the N-terminus, the 481-residue chain is MVKICCLGAGYVGGPTMAVIALKCPDVEVVVVDISAARIDAWNSDALPIYEPGLDDVVRRCRGRNLFFSSDVERHVGEADIVFVSVNTPTKARGLGAGKAADLTYWESAARMIAAVATSDKVVVEKSTVPVKTAEAIEKILDHNGRDGVGFQILSNPEFLAEGTAIRDLLAPDRVLIGGRETAAGRAAVQALKDVYTRWVPEERILTTNLWSAELSKLAANAFLAQRISSVNAMSALCEATGADVAEVAYAVGKDSRIGAKFLNASVGFGGSCFQKDILNLVYICECNGLPEVANYWKQVIKINDYQKSRFVNRVVSSMFNTVAGKKIAVLGFAFKKDTGDTRETPAIDVCKGLIGDKAKVSIYDPQVTEDQVQRDLAMSKFDWDHPVHLQPMSPTAIKQVSVAWDAYEAARAAHGVCILTEWDEFRSLDYARIYGGMQKPAFVFDGRNVVDAEKLREIGFIVYSIGKPLDAWLKDMPAVA.

Residues 8–13 (GAGYVG), D33, R38, 86–90 (VNTPT), 127–128 (ST), and E162 each bind NAD(+). Residues 158–162 (EFLAE), 217–224 (KLAANAFL), and 257–270 (RIGA…VGFG) contribute to the substrate site. Catalysis depends on C273, which acts as the Nucleophile. Position 273 to 276 (273 to 276 (CFQK)) interacts with NAD(+). 335-336 (FK) is a binding site for substrate. NAD(+) is bound at residue R343. Position 394 is a phosphoserine (S394). Position 448 (R448) interacts with substrate.

It belongs to the UDP-glucose/GDP-mannose dehydrogenase family.

It carries out the reaction UDP-alpha-D-glucose + 2 NAD(+) + H2O = UDP-alpha-D-glucuronate + 2 NADH + 3 H(+). It functions in the pathway nucleotide-sugar biosynthesis; UDP-alpha-D-glucuronate biosynthesis; UDP-alpha-D-glucuronate from UDP-alpha-D-glucose: step 1/1. In terms of biological role, involved in the biosynthesis of UDP-glucuronic acid (UDP-GlcA), providing nucleotide sugars for cell-wall polymers. The protein is UDP-glucose 6-dehydrogenase 1 (UGD1) of Oryza sativa subsp. japonica (Rice).